An 82-amino-acid polypeptide reads, in one-letter code: Small ribosomal subunit protein bS16 (82 aa).

It belongs to the bacterial ribosomal protein bS16 family.

In Dehalococcoides mccartyi (strain ATCC BAA-2100 / JCM 16839 / KCTC 5957 / BAV1), this protein is Small ribosomal subunit protein bS16.